The primary structure comprises 362 residues: UDP-N-acetylglucosamine--N-acetylmuramyl-(pentapeptide) pyrophosphoryl-undecaprenol N-acetylglucosamine transferase (362 aa).

Residues 15–17, Asn-127, Arg-165, Ser-191, Ile-247, 266–271, and Gln-292 contribute to the UDP-N-acetyl-alpha-D-glucosamine site; these read TGG and ALTVSE.

It belongs to the glycosyltransferase 28 family. MurG subfamily.

The protein localises to the cell inner membrane. The enzyme catalyses di-trans,octa-cis-undecaprenyl diphospho-N-acetyl-alpha-D-muramoyl-L-alanyl-D-glutamyl-meso-2,6-diaminopimeloyl-D-alanyl-D-alanine + UDP-N-acetyl-alpha-D-glucosamine = di-trans,octa-cis-undecaprenyl diphospho-[N-acetyl-alpha-D-glucosaminyl-(1-&gt;4)]-N-acetyl-alpha-D-muramoyl-L-alanyl-D-glutamyl-meso-2,6-diaminopimeloyl-D-alanyl-D-alanine + UDP + H(+). Its pathway is cell wall biogenesis; peptidoglycan biosynthesis. Its function is as follows. Cell wall formation. Catalyzes the transfer of a GlcNAc subunit on undecaprenyl-pyrophosphoryl-MurNAc-pentapeptide (lipid intermediate I) to form undecaprenyl-pyrophosphoryl-MurNAc-(pentapeptide)GlcNAc (lipid intermediate II). This Shewanella sp. (strain MR-4) protein is UDP-N-acetylglucosamine--N-acetylmuramyl-(pentapeptide) pyrophosphoryl-undecaprenol N-acetylglucosamine transferase.